Consider the following 706-residue polypeptide: Glycogen [starch] synthase (706 aa).

A UDP-binding site is contributed by arginine 26. Positions 191 and 197 each coordinate UDP-alpha-D-glucose. Positions 277, 278, 280, 283, and 287 each coordinate alpha-D-glucose 6-phosphate. Residue arginine 317 participates in UDP binding. Arginine 317 contacts UDP-alpha-D-glucose. Residue histidine 491 coordinates alpha-D-glucose 6-phosphate. Residues glutamate 500, tryptophan 502, and glycine 503 each coordinate UDP-alpha-D-glucose. Residue threonine 505 participates in UDP binding. Arginine 572 and arginine 576 together coordinate alpha-D-glucose 6-phosphate. A disordered region spans residues 670–706; it reads PEEEDPEEYPFPLTLKQRTGPGSPLDSIQGLQLNGTR.

Belongs to the glycosyltransferase 3 family. Interacts with glucogenin gnn; the interaction is direct.

The catalysed reaction is [(1-&gt;4)-alpha-D-glucosyl](n) + UDP-alpha-D-glucose = [(1-&gt;4)-alpha-D-glucosyl](n+1) + UDP + H(+). Its pathway is glycan biosynthesis; glycogen biosynthesis. Allosteric activation by glucose-6-phosphate, and phosphorylation by a cAMP-dependent kinase. Glycogen synthase participates in the glycogen biosynthetic process along with glycogenin and glycogen branching enzyme. Extends the primer composed of a few glucose units formed by glycogenin by adding new glucose units to it. In this context, glycogen synthase transfers the glycosyl residue from UDP-Glc to the non-reducing end of alpha-1,4-glucan. The chain is Glycogen [starch] synthase (gsy-1) from Neurospora crassa (strain ATCC 24698 / 74-OR23-1A / CBS 708.71 / DSM 1257 / FGSC 987).